The sequence spans 748 residues: Polyribonucleotide nucleotidyltransferase (748 aa).

Residues D487 and D493 each coordinate Mg(2+). The KH domain maps to P554 to I613. The region spanning G623–K691 is the S1 motif domain. Residues K695–N733 are disordered. Residues S699 to K712 show a composition bias toward polar residues. Over residues D713–D722 the composition is skewed to basic and acidic residues.

Belongs to the polyribonucleotide nucleotidyltransferase family. Mg(2+) serves as cofactor.

The protein localises to the cytoplasm. The enzyme catalyses RNA(n+1) + phosphate = RNA(n) + a ribonucleoside 5'-diphosphate. Its function is as follows. Involved in mRNA degradation. Catalyzes the phosphorolysis of single-stranded polyribonucleotides processively in the 3'- to 5'-direction. This Rickettsia rickettsii (strain Iowa) protein is Polyribonucleotide nucleotidyltransferase.